A 441-amino-acid chain; its full sequence is Hydroxycinnamoyl-CoA:5-hydroxyanthranilate N-hydroxycinnamoyltransferase HHT1 (441 aa).

Catalysis depends on proton acceptor residues His-158 and Asp-388.

Belongs to the plant acyltransferase family.

The enzyme catalyses 5-hydroxyanthranilate + (E)-4-coumaroyl-CoA = avenanthramide A + CoA. It carries out the reaction 5-hydroxyanthranilate + (E)-caffeoyl-CoA = avenanthramide C + CoA. In terms of biological role, involved in the biosynthesis of avenanthramide phytoalexins, which are phenolic alkaloids found mainly in oats. Catalyzes the N-acylation of 5-hydroxyanthranilate with 4-coumaroyl-CoA or caffeoyl-CoA as acyl donors, forming avenanthramide A and avenanthramide C, respectively. Does not accept feruloyl-CoA as a substrate. In Avena sativa (Oat), this protein is Hydroxycinnamoyl-CoA:5-hydroxyanthranilate N-hydroxycinnamoyltransferase HHT1.